Reading from the N-terminus, the 390-residue chain is Putative cyclin-F2-1 (390 aa).

Positions 135-154 are disordered; that stretch reads YNGDDDAPAPDDSMASRPQL.

It belongs to the cyclin family. Cyclin F subfamily.

The protein is Putative cyclin-F2-1 (CycF2-1) of Oryza sativa subsp. japonica (Rice).